A 98-amino-acid polypeptide reads, in one-letter code: NADH-ubiquinone oxidoreductase chain 4L (98 aa).

3 helical membrane-spanning segments follow: residues 1–21 (MTLVYMNMALAFTISLLGLLM), 29–49 (SLLCLEGMMLSLFVTMAVTIL), and 61–81 (IILLVFAACEAALGLSLLVMV).

It belongs to the complex I subunit 4L family. As to quaternary structure, core subunit of respiratory chain NADH dehydrogenase (Complex I) which is composed of 45 different subunits.

It is found in the mitochondrion inner membrane. It catalyses the reaction a ubiquinone + NADH + 5 H(+)(in) = a ubiquinol + NAD(+) + 4 H(+)(out). In terms of biological role, core subunit of the mitochondrial membrane respiratory chain NADH dehydrogenase (Complex I) which catalyzes electron transfer from NADH through the respiratory chain, using ubiquinone as an electron acceptor. Part of the enzyme membrane arm which is embedded in the lipid bilayer and involved in proton translocation. In Rousettus aegyptiacus (Egyptian fruit bat), this protein is NADH-ubiquinone oxidoreductase chain 4L (MT-ND4L).